A 231-amino-acid polypeptide reads, in one-letter code: uncharacterized protein (231 aa).

Residue 10 to 34 participates in NADP(+) binding; it reads IITGASSGIGAATAKALEKQGVKVV. S140 is a substrate binding site. The active-site Proton acceptor is the Y153.

This sequence belongs to the short-chain dehydrogenases/reductases (SDR) family.

This is an uncharacterized protein from Staphylococcus haemolyticus (strain JCSC1435).